The primary structure comprises 218 residues: Elongation factor Ts (218 aa).

The tract at residues 82–85 (TDFV) is involved in Mg(2+) ion dislocation from EF-Tu.

This sequence belongs to the EF-Ts family.

It localises to the cytoplasm. Functionally, associates with the EF-Tu.GDP complex and induces the exchange of GDP to GTP. It remains bound to the aminoacyl-tRNA.EF-Tu.GTP complex up to the GTP hydrolysis stage on the ribosome. This chain is Elongation factor Ts, found in Prochlorococcus marinus (strain MIT 9303).